An 85-amino-acid chain; its full sequence is Colicin-E6 immunity protein (85 aa).

This sequence belongs to the cloacin immunity protein family.

Functionally, this protein inhibits the 16S RNA hydrolyzing activity of colicin E6 by binding with high affinity to the C-terminal catalytic domain of E6. This protein is able to protect a cell, which harbors the plasmid ColE6 against colicin E6. The sequence is that of Colicin-E6 immunity protein (imm) from Escherichia coli.